A 294-amino-acid chain; its full sequence is 4-hydroxy-tetrahydrodipicolinate synthase (294 aa).

Pyruvate is bound at residue Thr47. The active-site Proton donor/acceptor is Tyr136. Lys164 (schiff-base intermediate with substrate) is an active-site residue. Position 206 (Val206) interacts with pyruvate.

Belongs to the DapA family. Homotetramer; dimer of dimers.

The protein localises to the cytoplasm. The catalysed reaction is L-aspartate 4-semialdehyde + pyruvate = (2S,4S)-4-hydroxy-2,3,4,5-tetrahydrodipicolinate + H2O + H(+). The protein operates within amino-acid biosynthesis; L-lysine biosynthesis via DAP pathway; (S)-tetrahydrodipicolinate from L-aspartate: step 3/4. Catalyzes the condensation of (S)-aspartate-beta-semialdehyde [(S)-ASA] and pyruvate to 4-hydroxy-tetrahydrodipicolinate (HTPA). The protein is 4-hydroxy-tetrahydrodipicolinate synthase of Nostoc punctiforme (strain ATCC 29133 / PCC 73102).